The sequence spans 150 residues: UPF0098 protein TC_0109 (150 aa).

The protein belongs to the UPF0098 family.

This Chlamydia muridarum (strain MoPn / Nigg) protein is UPF0098 protein TC_0109.